The primary structure comprises 360 residues: Peptide chain release factor 1 (360 aa).

Q235 carries the N5-methylglutamine modification.

Belongs to the prokaryotic/mitochondrial release factor family. In terms of processing, methylated by PrmC. Methylation increases the termination efficiency of RF1.

It is found in the cytoplasm. Peptide chain release factor 1 directs the termination of translation in response to the peptide chain termination codons UAG and UAA. The protein is Peptide chain release factor 1 of Burkholderia cenocepacia (strain ATCC BAA-245 / DSM 16553 / LMG 16656 / NCTC 13227 / J2315 / CF5610) (Burkholderia cepacia (strain J2315)).